The following is a 522-amino-acid chain: Gypsy retrotransposon integrase-like protein 1 (522 aa).

The 158-residue stretch at 135–292 (KVENPWSLVT…TPYFQMFSRN (158 aa)) folds into the Integrase catalytic domain. Ser502 carries the post-translational modification Phosphoserine.

The chain is Gypsy retrotransposon integrase-like protein 1 (GIN1) from Pongo abelii (Sumatran orangutan).